A 682-amino-acid polypeptide reads, in one-letter code: E3 ubiquitin-protein ligase RNF103 (682 aa).

4 helical membrane passes run 6–26, 326–346, 366–386, and 411–431; these read FFLL…EAIV, LFVL…FITQ, LLII…LDSF, and MFYS…GLLI. The span at 525–542 shows a compositional bias: acidic residues; sequence EEMSESSQDTENDSDSDN. Positions 525–549 are disordered; the sequence is EEMSESSQDTENDSDSDNTDTFSSS. The RING-type zinc-finger motif lies at 618-660; the sequence is CVVCLENFENGCLLMGLPCGHVFHQNCIVMWLAGGRHCCPVCR.

In terms of assembly, interacts with DERL1 and VCP. In terms of tissue distribution, expressed in different tissues including hippocampus, cerebral cortex, heart, kidney, spleen and lung. Expression is increased in hippocampus and frontal cortex after chronic treatment with antidepressants.

The protein localises to the endoplasmic reticulum membrane. The enzyme catalyses S-ubiquitinyl-[E2 ubiquitin-conjugating enzyme]-L-cysteine + [acceptor protein]-L-lysine = [E2 ubiquitin-conjugating enzyme]-L-cysteine + N(6)-ubiquitinyl-[acceptor protein]-L-lysine.. It functions in the pathway protein modification; protein ubiquitination. Acts as an E2-dependent E3 ubiquitin-protein ligase, probably involved in the ER-associated protein degradation pathway. This is E3 ubiquitin-protein ligase RNF103 (Rnf103) from Rattus norvegicus (Rat).